Reading from the N-terminus, the 544-residue chain is CTP synthase (544 aa).

The amidoligase domain stretch occupies residues 1–266 (MKYIFVTGGV…GKAVEELLGL (266 aa)). Ser12 serves as a coordination point for CTP. Ser12 contacts UTP. 13 to 18 (SLGKGV) is an ATP binding site. Tyr53 lines the L-glutamine pocket. Residue Asp70 participates in ATP binding. Positions 70 and 140 each coordinate Mg(2+). Residues 147 to 149 (DIE), 187 to 192 (KTKPTQ), and Lys223 each bind CTP. UTP-binding positions include 187 to 192 (KTKPTQ) and Lys223. The Glutamine amidotransferase type-1 domain maps to 291 to 544 (TIAIAGKYTA…VKAALEHQQQ (254 aa)). Gly356 is a binding site for L-glutamine. Cys383 acts as the Nucleophile; for glutamine hydrolysis in catalysis. L-glutamine contacts are provided by residues 384–387 (LGMQ), Glu407, and Arg467. Active-site residues include His517 and Glu519.

Belongs to the CTP synthase family. As to quaternary structure, homotetramer.

The catalysed reaction is UTP + L-glutamine + ATP + H2O = CTP + L-glutamate + ADP + phosphate + 2 H(+). The enzyme catalyses L-glutamine + H2O = L-glutamate + NH4(+). It catalyses the reaction UTP + NH4(+) + ATP = CTP + ADP + phosphate + 2 H(+). It participates in pyrimidine metabolism; CTP biosynthesis via de novo pathway; CTP from UDP: step 2/2. Its activity is regulated as follows. Allosterically activated by GTP, when glutamine is the substrate; GTP has no effect on the reaction when ammonia is the substrate. The allosteric effector GTP functions by stabilizing the protein conformation that binds the tetrahedral intermediate(s) formed during glutamine hydrolysis. Inhibited by the product CTP, via allosteric rather than competitive inhibition. Catalyzes the ATP-dependent amination of UTP to CTP with either L-glutamine or ammonia as the source of nitrogen. Regulates intracellular CTP levels through interactions with the four ribonucleotide triphosphates. The sequence is that of CTP synthase from Deinococcus radiodurans (strain ATCC 13939 / DSM 20539 / JCM 16871 / CCUG 27074 / LMG 4051 / NBRC 15346 / NCIMB 9279 / VKM B-1422 / R1).